The following is a 504-amino-acid chain: D-alanine--D-alanyl carrier protein ligase (504 aa).

152–153 (TS) contacts ATP. D197 serves as a coordination point for D-alanine. 292-297 (NTYGPT) is a binding site for ATP. Residue V301 coordinates D-alanine. Residues D383, 394 to 397 (YNGR), and K492 each bind ATP. K492 contributes to the D-alanine binding site.

It belongs to the ATP-dependent AMP-binding enzyme family. DltA subfamily.

It localises to the cytoplasm. The enzyme catalyses holo-[D-alanyl-carrier protein] + D-alanine + ATP = D-alanyl-[D-alanyl-carrier protein] + AMP + diphosphate. Its pathway is cell wall biogenesis; lipoteichoic acid biosynthesis. In terms of biological role, catalyzes the first step in the D-alanylation of lipoteichoic acid (LTA), the activation of D-alanine and its transfer onto the D-alanyl carrier protein (Dcp) DltC. In an ATP-dependent two-step reaction, forms a high energy D-alanyl-AMP intermediate, followed by transfer of the D-alanyl residue as a thiol ester to the phosphopantheinyl prosthetic group of the Dcp. D-alanylation of LTA plays an important role in modulating the properties of the cell wall in Gram-positive bacteria, influencing the net charge of the cell wall. The sequence is that of D-alanine--D-alanyl carrier protein ligase from Bacillus mycoides (strain KBAB4) (Bacillus weihenstephanensis).